Here is a 294-residue protein sequence, read N- to C-terminus: 4-hydroxy-tetrahydrodipicolinate synthase (294 aa).

Position 47 (Ser47) interacts with pyruvate. The Proton donor/acceptor role is filled by Tyr135. Lys163 serves as the catalytic Schiff-base intermediate with substrate. Ile205 is a pyruvate binding site.

It belongs to the DapA family. Homotetramer; dimer of dimers.

Its subcellular location is the cytoplasm. The enzyme catalyses L-aspartate 4-semialdehyde + pyruvate = (2S,4S)-4-hydroxy-2,3,4,5-tetrahydrodipicolinate + H2O + H(+). It participates in amino-acid biosynthesis; L-lysine biosynthesis via DAP pathway; (S)-tetrahydrodipicolinate from L-aspartate: step 3/4. Catalyzes the condensation of (S)-aspartate-beta-semialdehyde [(S)-ASA] and pyruvate to 4-hydroxy-tetrahydrodipicolinate (HTPA). The polypeptide is 4-hydroxy-tetrahydrodipicolinate synthase (Ralstonia nicotianae (strain ATCC BAA-1114 / GMI1000) (Ralstonia solanacearum)).